A 145-amino-acid chain; its full sequence is FAD synthase (145 aa).

ATP contacts are provided by residues 5-6, 10-13, D92, and Y119; these read TF and HPGH.

This sequence belongs to the archaeal FAD synthase family. As to quaternary structure, homodimer. Requires a divalent metal cation as cofactor.

It carries out the reaction FMN + ATP + H(+) = FAD + diphosphate. It participates in cofactor biosynthesis; FAD biosynthesis; FAD from FMN: step 1/1. In terms of biological role, catalyzes the transfer of the AMP portion of ATP to flavin mononucleotide (FMN) to produce flavin adenine dinucleotide (FAD) coenzyme. The polypeptide is FAD synthase (Methanothermus fervidus (strain ATCC 43054 / DSM 2088 / JCM 10308 / V24 S)).